The sequence spans 199 residues: Pneumococcal vaccine antigen A homolog (199 aa).

It localises to the cell surface. This Streptococcus pyogenes serotype M3 (strain ATCC BAA-595 / MGAS315) protein is Pneumococcal vaccine antigen A homolog (pvaA).